The chain runs to 265 residues: Cell adhesion molecule CEACAM7 (265 aa).

Positions 1 to 35 are cleaved as a signal peptide; sequence MGSPSACPYRVCIPWQGLLLTASLLTFWNLPNSAQ. The 107-residue stretch at 36 to 142 folds into the Ig-like V-type domain; it reads TNIDVVPFNV…EEVTRQFYVF (107 aa). N-linked (GlcNAc...) asparagine glycosylation is found at N57, N85, N105, N112, N174, N183, and N198. An Ig-like C2-type domain is found at 146–233; the sequence is PKPSITSNNF…ASRSDPVTLN (88 aa). Cysteines 168 and 216 form a disulfide. S242 carries the GPI-anchor amidated serine lipid modification. Positions 243–265 are cleaved as a propeptide — removed in mature form; sequence SPDLSAGTAVSIMIGVLAGMALI.

This sequence belongs to the immunoglobulin superfamily. CEA family. In terms of assembly, homodimer. As to expression, expressed in columnar epithelial cells of the colon (at protein level). Strongly down-regulated in colonic adenocarcinomas.

The protein localises to the cell membrane. The protein resides in the apical cell membrane. This Homo sapiens (Human) protein is Cell adhesion molecule CEACAM7.